The chain runs to 371 residues: MTLKNALLAFRNAINILDKNLINLLAKRKQLSLNIAHTKVKNNYPVRDIEREQMLLKNLTILGEKHFLNKKYIESLFSIILEDSVLTQKKWIKKYNLNKYKLEKISFLGSFGSYSHLAAQKYAKKHSKILTDKIYKNFSDVITSVEQQQSTYAILPIENQSSGLIIEVYKLLQKTPLFIIGNIYIHANHCLLAKKYTPILKIQKIYSHIQPFKQCSKFISLFPNWKLSNTTSTSEAIQHVAKENDNTIAALGNESYGELNKLEVIAKNISNKRNNITQFIILAQKKTYITNKKTHLKTIILISKKNENCEKIIRNILHKNKITLLKLKYYVTSKVLLEKIFFIEIENIYCIKHILKQFTIEIKCIKILGCF.

Positions 1 to 92 (MTLKNALLAF…DSVLTQKKWI (92 aa)) constitute a Chorismate mutase domain. Residues arginine 11, arginine 28, lysine 39, aspartate 48, glutamate 52, serine 84, and glutamine 88 each contribute to the substrate site. In terms of domain architecture, Prephenate dehydratase spans 104 to 284 (KISFLGSFGS…NITQFIILAQ (181 aa)). Residues 285–371 (KKTYITNKKT…IKCIKILGCF (87 aa)) form a regulatory region.

It is found in the cytoplasm. The catalysed reaction is chorismate = prephenate. It carries out the reaction prephenate + H(+) = 3-phenylpyruvate + CO2 + H2O. It functions in the pathway amino-acid biosynthesis; L-phenylalanine biosynthesis; phenylpyruvate from prephenate: step 1/1. Its pathway is metabolic intermediate biosynthesis; prephenate biosynthesis; prephenate from chorismate: step 1/1. Its function is as follows. Catalyzes the Claisen rearrangement of chorismate to prephenate and the decarboxylation/dehydration of prephenate to phenylpyruvate. The polypeptide is Bifunctional chorismate mutase/prephenate dehydratase (pheA) (Buchnera aphidicola subsp. Baizongia pistaciae (strain Bp)).